Here is a 273-residue protein sequence, read N- to C-terminus: Bis(5'-nucleosyl)-tetraphosphatase, symmetrical (273 aa).

The protein belongs to the Ap4A hydrolase family.

It carries out the reaction P(1),P(4)-bis(5'-adenosyl) tetraphosphate + H2O = 2 ADP + 2 H(+). Hydrolyzes diadenosine 5',5'''-P1,P4-tetraphosphate to yield ADP. The chain is Bis(5'-nucleosyl)-tetraphosphatase, symmetrical from Aeromonas salmonicida (strain A449).